A 348-amino-acid polypeptide reads, in one-letter code: MNMNTAPKQYGFYMPAEWYPHERCWMAWPCHHETWSKIGLDKAKMAYARVAKAIAQFEPVTLLVNPGDEDSAENLCKGHNIEIISLPINDSWTRDTGATFLINNERQLAGVDWIHNAWGGNYADCSLDNLIASHLIKYTEAQYFHAPLVMEGGSFHVDGEGTILTSKECLLNSNRNPHLSQQEIEQYLINYLGAERIIWLNMGLIGDETDGHVDEIATFIAPGKVLCLITKDKEDPNYHRLQENFEILKSSKDARGRTFEVYTVEQPPATYLNGERLTLSYINFYMANQGIVMPAFGYESFDRLAYQLFVQIFPGYQITQIDALDVFSGGGGIHCITQQQPKSHKLVE.

The Amidino-cysteine intermediate role is filled by C335.

This sequence belongs to the agmatine deiminase family.

It catalyses the reaction agmatine + H2O = N-carbamoylputrescine + NH4(+). This is Putative agmatine deiminase from Legionella pneumophila subsp. pneumophila (strain Philadelphia 1 / ATCC 33152 / DSM 7513).